Consider the following 345-residue polypeptide: Probable dual-specificity RNA methyltransferase RlmN (345 aa).

The Proton acceptor role is filled by Glu98. The 229-residue stretch at 104–332 (TYKRLTVCVS…VSIRYSRGLE (229 aa)) folds into the Radical SAM core domain. Cysteines 111 and 337 form a disulfide. Cys118, Cys122, and Cys125 together coordinate [4Fe-4S] cluster. S-adenosyl-L-methionine-binding positions include 165–166 (GE), Ser195, 218–220 (SLH), and Asn294. Cys337 acts as the S-methylcysteine intermediate in catalysis.

This sequence belongs to the radical SAM superfamily. RlmN family. The cofactor is [4Fe-4S] cluster.

The protein localises to the cytoplasm. It catalyses the reaction adenosine(2503) in 23S rRNA + 2 reduced [2Fe-2S]-[ferredoxin] + 2 S-adenosyl-L-methionine = 2-methyladenosine(2503) in 23S rRNA + 5'-deoxyadenosine + L-methionine + 2 oxidized [2Fe-2S]-[ferredoxin] + S-adenosyl-L-homocysteine. The catalysed reaction is adenosine(37) in tRNA + 2 reduced [2Fe-2S]-[ferredoxin] + 2 S-adenosyl-L-methionine = 2-methyladenosine(37) in tRNA + 5'-deoxyadenosine + L-methionine + 2 oxidized [2Fe-2S]-[ferredoxin] + S-adenosyl-L-homocysteine. In terms of biological role, specifically methylates position 2 of adenine 2503 in 23S rRNA and position 2 of adenine 37 in tRNAs. In Trichodesmium erythraeum (strain IMS101), this protein is Probable dual-specificity RNA methyltransferase RlmN.